The chain runs to 227 residues: Probable septum site-determining protein MinC (227 aa).

It belongs to the MinC family. Interacts with MinD and FtsZ.

In terms of biological role, cell division inhibitor that blocks the formation of polar Z ring septums. Rapidly oscillates between the poles of the cell to destabilize FtsZ filaments that have formed before they mature into polar Z rings. Prevents FtsZ polymerization. This Acetivibrio thermocellus (strain ATCC 27405 / DSM 1237 / JCM 9322 / NBRC 103400 / NCIMB 10682 / NRRL B-4536 / VPI 7372) (Clostridium thermocellum) protein is Probable septum site-determining protein MinC.